A 395-amino-acid polypeptide reads, in one-letter code: Pyridinium-3,5-bisthiocarboxylic acid mononucleotide nickel insertion protein (395 aa).

The protein belongs to the LarC family.

The catalysed reaction is Ni(II)-pyridinium-3,5-bisthiocarboxylate mononucleotide = pyridinium-3,5-bisthiocarboxylate mononucleotide + Ni(2+). Its function is as follows. Involved in the biosynthesis of a nickel-pincer cofactor ((SCS)Ni(II) pincer complex). Binds Ni(2+), and functions in nickel delivery to pyridinium-3,5-bisthiocarboxylic acid mononucleotide (P2TMN), to form the mature cofactor. Is thus probably required for the activation of nickel-pincer cofactor-dependent enzymes. The chain is Pyridinium-3,5-bisthiocarboxylic acid mononucleotide nickel insertion protein from Staphylococcus epidermidis (strain ATCC 12228 / FDA PCI 1200).